The following is a 227-amino-acid chain: MRYLIATAVLVAVVLVGWPAAGAPPSCAGLGGTVQAGQICHVHASGPKYMLDMTFPVDYPDQQALTDYITQNRDGFVNVAQGSPLRDQPYQMDATSEQHSSGQPPQATRSVVLKFFQDLGGAHPSTWYKAFNYNLATSQPITFDTLFVPGTTPLDSIYPIVQRELARQTGFGAAILPSTGLDPAHYQNFAITDDSLIFYFAQGELLPSFVGACQAQVPRSAIPPLAI.

Residues 3–23 (YLIATAVLVAVVLVGWPAAGA) form a helical membrane-spanning segment.

Belongs to the RsiV family.

The protein resides in the cell membrane. Its subcellular location is the secreted. It localises to the cell wall. The catalysed reaction is a fatty acid ester + H2O = an aliphatic alcohol + a fatty acid + H(+). The enzyme catalyses an acetyl ester + H2O = an aliphatic alcohol + acetate + H(+). It carries out the reaction a butanoate ester + H2O = an aliphatic alcohol + butanoate + H(+). It catalyses the reaction a hexanoate ester + H2O = an aliphatic alcohol + hexanoate + H(+). The catalysed reaction is a dodecanoate ester + H2O = an aliphatic alcohol + dodecanoate + H(+). The enzyme catalyses a tetradecanoate ester + H2O = an aliphatic alcohol + tetradecanoate + H(+). It carries out the reaction an octanoate ester + H2O = an aliphatic alcohol + octanoate + H(+). Functionally, hydrolyzes ester substrates carbon chain lengths ranging from C2 to C14. In vitro, acetate (C2), butyrate (C4) and caprylate (C6) are hydrolyzed with high efficiency. Has lower activity against laurate (C12), myristate (C14) and caproate (C8), and weak activity against palmitate (C16). This is Esterase Rv3036c from Mycobacterium tuberculosis (strain ATCC 25618 / H37Rv).